The following is a 299-amino-acid chain: Methionyl-tRNA formyltransferase (299 aa).

A (6S)-5,6,7,8-tetrahydrofolate-binding site is contributed by 109-112 (SLLP).

Belongs to the Fmt family.

The enzyme catalyses L-methionyl-tRNA(fMet) + (6R)-10-formyltetrahydrofolate = N-formyl-L-methionyl-tRNA(fMet) + (6S)-5,6,7,8-tetrahydrofolate + H(+). Functionally, attaches a formyl group to the free amino group of methionyl-tRNA(fMet). The formyl group appears to play a dual role in the initiator identity of N-formylmethionyl-tRNA by promoting its recognition by IF2 and preventing the misappropriation of this tRNA by the elongation apparatus. The protein is Methionyl-tRNA formyltransferase of Dinoroseobacter shibae (strain DSM 16493 / NCIMB 14021 / DFL 12).